The following is a 401-amino-acid chain: MSKLVLILNCGSSSLKFAILDPATGEEKLSGLAEAFFLPEARIKWKLNGEKGNADLGAGAAHTEALNFIASNILTDELKNSIAAIGHRIVHGGEKYTQSVIVTDEVVKGIEDAAQFAPLHNPAHLIGIREAFNAFPHLKDKNVVVFDTAFHQTMSEEAFLYALPYSLYKEHGVRRYGAHGTSHYFISREVAEYVGKPADQVNAIICHLGNGGSVSVVRNGQCIDTSMGLTPLEGLVMGTRCGDIDPAIIFYLYKTLGMSMEQIEETLVKKSGLLGLTEVTSDCRYAEDNYDNASKPEAKRALNVYSYRLAKYIGAYMAVLGDDHLDAIAFTGGIGENSAHVRELALNHLKLFGIQIDNERNLAARFGKDGVITTDDSAFKAIVLPTNEELVIAQDTARLCF.

Asparagine 9 is a binding site for Mg(2+). Lysine 16 contacts ATP. A substrate-binding site is contributed by arginine 88. Aspartate 147 (proton donor/acceptor) is an active-site residue. ATP-binding positions include histidine 207–glycine 211, aspartate 282–arginine 284, and glycine 333–asparagine 337. Residue glutamate 388 coordinates Mg(2+).

The protein belongs to the acetokinase family. As to quaternary structure, homodimer. It depends on Mg(2+) as a cofactor. The cofactor is Mn(2+).

It localises to the cytoplasm. The catalysed reaction is acetate + ATP = acetyl phosphate + ADP. Its pathway is metabolic intermediate biosynthesis; acetyl-CoA biosynthesis; acetyl-CoA from acetate: step 1/2. In terms of biological role, catalyzes the formation of acetyl phosphate from acetate and ATP. Can also catalyze the reverse reaction. This chain is Acetate kinase, found in Haemophilus influenzae (strain PittEE).